We begin with the raw amino-acid sequence, 214 residues long: ATP phosphoribosyltransferase (214 aa).

Belongs to the ATP phosphoribosyltransferase family. Short subfamily. Heteromultimer composed of HisG and HisZ subunits.

It localises to the cytoplasm. The enzyme catalyses 1-(5-phospho-beta-D-ribosyl)-ATP + diphosphate = 5-phospho-alpha-D-ribose 1-diphosphate + ATP. The protein operates within amino-acid biosynthesis; L-histidine biosynthesis; L-histidine from 5-phospho-alpha-D-ribose 1-diphosphate: step 1/9. Catalyzes the condensation of ATP and 5-phosphoribose 1-diphosphate to form N'-(5'-phosphoribosyl)-ATP (PR-ATP). Has a crucial role in the pathway because the rate of histidine biosynthesis seems to be controlled primarily by regulation of HisG enzymatic activity. This chain is ATP phosphoribosyltransferase, found in Marinomonas sp. (strain MWYL1).